A 124-amino-acid chain; its full sequence is UPF0299 membrane protein VIBHAR_02118 (124 aa).

4 helical membrane passes run 6–26, 35–55, 72–92, and 95–115; these read LLQLVHLLISLALIMGALGIG, VSVPGSVIGMLVLFFSMTLGL, MILLFVPISVGLMQHFDMLLA, and LPIIASAVGGSLIVLISLAWF.

This sequence belongs to the UPF0299 family.

It is found in the cell inner membrane. This chain is UPF0299 membrane protein VIBHAR_02118, found in Vibrio campbellii (strain ATCC BAA-1116).